The primary structure comprises 211 residues: Ribosomal RNA small subunit methyltransferase G (211 aa).

Residues Gly-81, Leu-86, 132-133, and Arg-147 contribute to the S-adenosyl-L-methionine site; that span reads AE.

The protein belongs to the methyltransferase superfamily. RNA methyltransferase RsmG family.

The protein localises to the cytoplasm. The enzyme catalyses guanosine(527) in 16S rRNA + S-adenosyl-L-methionine = N(7)-methylguanosine(527) in 16S rRNA + S-adenosyl-L-homocysteine. Its function is as follows. Specifically methylates the N7 position of guanine in position 527 of 16S rRNA. In Dichelobacter nodosus (strain VCS1703A), this protein is Ribosomal RNA small subunit methyltransferase G.